A 256-amino-acid chain; its full sequence is Probable aquaporin TIP4-2 (256 aa).

Transmembrane regions (helical) follow at residues 25-45 (AVAG…ASTI), 59-79 (AVTA…TAGF), 86-108 (LNPA…SALY), 146-166 (GVAA…ATIL), and 178-198 (PLLT…LTGA). The short motif at 87–89 (NPA) is the NPA 1 element. Positions 201–203 (NPA) match the NPA 2 motif. A helical transmembrane segment spans residues 220–240 (VYWVGPLAGGPLAVVAYELLF).

It belongs to the MIP/aquaporin (TC 1.A.8) family. TIP (TC 1.A.8.10) subfamily. As to expression, expressed in roots, leaves and anthers.

The protein localises to the vacuole membrane. Functionally, aquaporins facilitate the transport of water and small neutral solutes across cell membranes. May be involved in transport from the vacuolar compartment to the cytoplasm. The polypeptide is Probable aquaporin TIP4-2 (TIP4-2) (Oryza sativa subsp. japonica (Rice)).